An 85-amino-acid polypeptide reads, in one-letter code: UPF0386 protein MXAN_1729 (85 aa).

This sequence belongs to the UPF0386 family.

This is UPF0386 protein MXAN_1729 from Myxococcus xanthus (strain DK1622).